Here is a 403-residue protein sequence, read N- to C-terminus: NADH-quinone oxidoreductase subunit D (403 aa).

It belongs to the complex I 49 kDa subunit family. In terms of assembly, NDH-1 is composed of 14 different subunits. Subunits NuoB, C, D, E, F, and G constitute the peripheral sector of the complex.

It localises to the cell inner membrane. It catalyses the reaction a quinone + NADH + 5 H(+)(in) = a quinol + NAD(+) + 4 H(+)(out). Functionally, NDH-1 shuttles electrons from NADH, via FMN and iron-sulfur (Fe-S) centers, to quinones in the respiratory chain. The immediate electron acceptor for the enzyme in this species is believed to be ubiquinone. Couples the redox reaction to proton translocation (for every two electrons transferred, four hydrogen ions are translocated across the cytoplasmic membrane), and thus conserves the redox energy in a proton gradient. The protein is NADH-quinone oxidoreductase subunit D of Ruegeria sp. (strain TM1040) (Silicibacter sp.).